The following is an 87-amino-acid chain: Putative regulatory protein GK1166 (87 aa).

This sequence belongs to the RemA family.

The sequence is that of Putative regulatory protein GK1166 from Geobacillus kaustophilus (strain HTA426).